The primary structure comprises 608 residues: Protein FAM151A (608 aa).

A helical transmembrane segment spans residues 14 to 34; the sequence is WILAGSVSMTLVLAISMILGL. A disordered region spans residues 588-608; it reads RHRPSSRTGPSYVEGFPGESR.

It belongs to the menorin family.

It localises to the membrane. This is Protein FAM151A (Fam151a) from Rattus norvegicus (Rat).